A 460-amino-acid polypeptide reads, in one-letter code: Ankyrin repeat and MYND domain-containing protein 2 (460 aa).

3 ANK repeats span residues 45–74, 79–108, and 159–188; these read HGMTPLMHAAYKGKVDMCRLLLRHGADVNC, HGYTALMFAGLSGNKEITWMMLEAGAETDV, and KLAGPLHKIITTTNMHPVKIVLLVKENPLL. Positions 320, 323, 332, 335, 341, 345, 353, and 357 each coordinate Zn(2+). Residues 320–357 form an MYND-type zinc finger; it reads CTTCGEKGADKRCSVCKVVMYCDQNCQKTHWFTHKKVC. Basic and acidic residues-rich tracts occupy residues 371-387 and 425-436; these read AAKEKRRQEKKQKKDEA and ELTKEPEARAPR. The segment at 371-460 is disordered; it reads AAKEKRRQEK…ALQKIQDSEE (90 aa).

It is found in the cell projection. It localises to the cilium. May be involved in the trafficking of signaling proteins to the cilia. The sequence is that of Ankyrin repeat and MYND domain-containing protein 2 (ANKMY2) from Gallus gallus (Chicken).